Here is a 159-residue protein sequence, read N- to C-terminus: Ribosome maturation factor RimP (159 aa).

This sequence belongs to the RimP family.

The protein resides in the cytoplasm. Its function is as follows. Required for maturation of 30S ribosomal subunits. The polypeptide is Ribosome maturation factor RimP (Streptococcus agalactiae serotype III (strain NEM316)).